The sequence spans 1820 residues: uncharacterized protein (1820 aa).

Disordered stretches follow at residues 1-73 (MQWT…TLSG), 86-158 (TTTT…VRSA), 226-260 (GSSG…NNNY), 286-366 (EERA…QETE), 453-497 (DVQD…RNLS), 519-548 (LSSI…TDTA), 577-597 (GNSS…PPTP), 619-689 (GAGT…TASG), and 735-830 (HSHN…TPSS). Polar residues predominate over residues 20-31 (NRNSIEQRTPAN). Residues 86–128 (TTTTTIIESSSSTNTTLEKNSPSPAGGSCSSGSGSLSPAYLQH) show a composition bias toward low complexity. Over residues 129 to 146 (HLQHHGSPLHHLQVHHHT) the composition is skewed to basic residues. The span at 247–259 (SNSSNCSSQFNNN) shows a compositional bias: low complexity. Residues 265–308 (VDSLDDMLRKLTELEQRVIEAEERAEEAEDKVRAMEQRLSEWPK) are a coiled coil. Over residues 294-305 (DKVRAMEQRLSE) the composition is skewed to basic and acidic residues. Residues 346 to 358 (ASGGATAGAAGSG) are compositionally biased toward low complexity. Positions 362–438 (TQETEKTITS…LKNHIANQSQ (77 aa)) form a coiled coil. Polar residues predominate over residues 453-463 (DVQDFTGSGSN). A phosphoserine mark is found at Ser-542 and Ser-543. Low complexity predominate over residues 623 to 632 (GTSTAESTAS). Residues 655-669 (HGSGTGIGTGDGHGT) are compositionally biased toward gly residues. Positions 738-769 (NSSSTDNTETSTSGSASSPSKSLKTSSSLSPA) are enriched in low complexity. Over residues 787-818 (QSRTSTTPSSRINQHLQPSQHQHHTLSNQNHG) the composition is skewed to polar residues. 2 consecutive PH domains span residues 909-1003 (SLEK…NVQR) and 1017-1124 (KPTV…VVSG). A phosphoserine mark is found at Ser-1073, Ser-1075, and Ser-1077. A MyTH4 domain is found at 1159 to 1378 (HTKDTITAPL…PSRMEVLSIL (220 aa)). An FERM domain is found at 1389 to 1712 (HAIPVHMMNS…DYMNALGHTV (324 aa)). 2 disordered regions span residues 1713-1748 (PGTP…ATGF) and 1764-1820 (ATHT…QRIK). The span at 1714 to 1724 (GTPQMNSLTRN) shows a compositional bias: polar residues. Positions 1764 to 1781 (ATHTLNSNHSHTLSSSHH) are enriched in low complexity. Basic and acidic residues predominate over residues 1805 to 1820 (HQPDILKSTPDHQRIK).

This is an uncharacterized protein from Drosophila melanogaster (Fruit fly).